Reading from the N-terminus, the 254-residue chain is Short-chain dehydrogenase srdF (254 aa).

Positions 18, 37, 67, 95, 167, 171, 199, and 201 each coordinate NADP(+). Tyr167 (proton donor) is an active-site residue. The active-site Lowers pKa of active site Tyr is the Lys171.

This sequence belongs to the short-chain dehydrogenases/reductases (SDR) family.

Its function is as follows. Short-chain dehydrogenase; part of the gene cluster that mediates the biosynthesis of sordarial, a salicylic aldehyde structurally related to the phytotoxin pyriculol. The most interesting aspect of this pathway is formation of an aromatic product from the highly reducing polyketide synthase srdA. SrdA synthesizes a reduced polyketide chain from one molecule of acetyl-CoA and five molecules of malonyl-CoA. The polyketide chain is then reductively released as an aldehyde. The oxidoreductases srdC, srdD and srdE then oxidize one of the hydroxy groups to facilitate the intramolecular aldol condensation, followed by dehydration to yield a salicylic aldehyde. This aldehyde can undergo facile reduction by endogenous reductases to yield the alcohol 1-hydroxy-2-hydroxymethyl-3-pent-1,3-dienylbenzene. The flavin-dependent srdI counteract against the propensity of the aldehydes to be reduced under physiological conditions and is responsible for reoxidizing 1-hydroxy-2-hydroxymethyl-3-pent-1,3-dienylbenzene back to the salicylic aldehyde. This salicylic aldehyde is then selectively epoxidized by the cupin-domain-containing oxidoreductase srdB to yield the epoxide, which can be hydrolyzed stereoselectively by the hydrolase srdG to give the final product sordarial. The sequence is that of Short-chain dehydrogenase srdF from Neurospora crassa (strain ATCC 24698 / 74-OR23-1A / CBS 708.71 / DSM 1257 / FGSC 987).